Reading from the N-terminus, the 357-residue chain is 3-isopropylmalate dehydrogenase (357 aa).

76–89 serves as a coordination point for NAD(+); it reads GPQWDTIDPALRPE. 4 residues coordinate substrate: Arg-96, Arg-106, Arg-134, and Asp-224. The Mg(2+) site is built by Asp-224, Asp-248, and Asp-252. An NAD(+)-binding site is contributed by 282–294; that stretch reads GSAPDIAGQGVAN.

It belongs to the isocitrate and isopropylmalate dehydrogenases family. LeuB type 1 subfamily. In terms of assembly, homodimer. Mg(2+) is required as a cofactor. It depends on Mn(2+) as a cofactor.

The protein resides in the cytoplasm. It catalyses the reaction (2R,3S)-3-isopropylmalate + NAD(+) = 4-methyl-2-oxopentanoate + CO2 + NADH. It participates in amino-acid biosynthesis; L-leucine biosynthesis; L-leucine from 3-methyl-2-oxobutanoate: step 3/4. Functionally, catalyzes the oxidation of 3-carboxy-2-hydroxy-4-methylpentanoate (3-isopropylmalate) to 3-carboxy-4-methyl-2-oxopentanoate. The product decarboxylates to 4-methyl-2 oxopentanoate. In Xylella fastidiosa (strain 9a5c), this protein is 3-isopropylmalate dehydrogenase.